The sequence spans 229 residues: MPILKNDWAPLLEEEFQKPYYLKLREFLKEEYRTRTIYPDMYDIFNALHYTPYANVKVVLLGQDPYHGPGQAHGLSFSVKPGVPVPPSLVNIFKELHDDLGCYIPDNGYLVKWAKQGVLLLNTVLTVRRGQANSHRGKGWEHFTDRVIELVNEKDDPVVFLLWGRNAQEKKERITNPRHHIIEAPHPSPFSAARGFFGHRPFSRTNAFLTKCGREPIDWQIENIGARAE.

Aspartate 64 (proton acceptor) is an active-site residue.

Belongs to the uracil-DNA glycosylase (UDG) superfamily. UNG family.

The protein resides in the cytoplasm. The enzyme catalyses Hydrolyzes single-stranded DNA or mismatched double-stranded DNA and polynucleotides, releasing free uracil.. Functionally, excises uracil residues from the DNA which can arise as a result of misincorporation of dUMP residues by DNA polymerase or due to deamination of cytosine. The polypeptide is Uracil-DNA glycosylase (Geobacillus thermodenitrificans (strain NG80-2)).